Reading from the N-terminus, the 149-residue chain is Thioredoxin-like protein 4B (149 aa).

This sequence belongs to the DIM1 family. As to quaternary structure, homodimer. Interacts with the U5-102 kDa protein subunit of the spliceosome.

The protein resides in the nucleus. Essential role in pre-mRNA splicing. Required in cell cycle progression for S/G(2) transition. The polypeptide is Thioredoxin-like protein 4B (TXNL4B) (Homo sapiens (Human)).